Consider the following 302-residue polypeptide: Putative peptide permease protein BRA0407/BS1330_II0404 (302 aa).

The segment at 1–22 (MRSSIHASRLRKMGQSIPASTG) is disordered. 6 helical membrane-spanning segments follow: residues 38–58 (IFGL…PLWL), 101–121 (LLVA…IGAI), 147–167 (IFLL…VVVI), 200–222 (AGLG…VVYA), 230–250 (ILLE…AASW), and 268–288 (WQWL…NFIG). Residues 97 to 288 (GRISLLVAVS…LAVLAINFIG (192 aa)) form the ABC transmembrane type-1 domain.

This sequence belongs to the binding-protein-dependent transport system permease family. In terms of assembly, the complex is composed of two ATP-binding proteins (BRA0404 and BRA0405), two transmembrane proteins (BRA0407 and BRA0408) and a solute-binding protein (BRA0409).

It localises to the cell inner membrane. In terms of biological role, probably part of an ABC transporter complex that could be involved in peptide import. Probably responsible for the translocation of the substrate across the membrane. This Brucella suis biovar 1 (strain 1330) protein is Putative peptide permease protein BRA0407/BS1330_II0404.